Here is a 269-residue protein sequence, read N- to C-terminus: Chromophore lyase CRL, chloroplastic (269 aa).

A helical transmembrane segment spans residues 19-36 (ARGLVVKTLVLIGGALLI).

It belongs to the CpcT/CpeT biliprotein lyase family. In terms of tissue distribution, mostly expressed in shoot apices, to a lower extent, in leaves, inflorescence stems, buds and cotyledons, and, at low levels, in roots and siliques.

The protein localises to the plastid. It localises to the chloroplast outer membrane. Covalently attaches a chromophore to Cys residue(s) of phycobiliproteins. Required for plastid division, and involved in cell differentiation and regulation of the cell division plane. Maintenance of plastid homeostasis controls plant preconditioning to stress and stress acclimation. Its function is as follows. Confers sensitivity to cabbage leaf curl virus (CaLCuV), probably by supporting viral movement. The sequence is that of Chromophore lyase CRL, chloroplastic (CRL) from Arabidopsis thaliana (Mouse-ear cress).